The chain runs to 191 residues: Probable ribosome biogenesis protein RLP24 (191 aa).

Ser136 bears the Phosphoserine mark.

The protein belongs to the eukaryotic ribosomal protein eL24 family. Associated with nucleolar and cytoplasmic pre-60S particles. At the end of biogenesis it dissociates from cytoplasmic pre-60S particles and is likely to be exchanged for its ribosomal homologue, RPL24.

The protein localises to the nucleus. It localises to the nucleolus. Its function is as follows. Involved in the biogenesis of the 60S ribosomal subunit. Ensures the docking of NOG1 to pre-60S particles. The sequence is that of Probable ribosome biogenesis protein RLP24 (RpL24-like) from Drosophila melanogaster (Fruit fly).